The chain runs to 238 residues: Ion-translocating oxidoreductase complex subunit E (238 aa).

Helical transmembrane passes span 41–61 (LGLG…VSLV), 71–91 (LPAF…LMQA), 95–115 (ELYQ…VILG), 130–150 (SFDG…LGGL), and 184–204 (GFLL…LIAL).

Belongs to the NqrDE/RnfAE family. The complex is composed of six subunits: RnfA, RnfB, RnfC, RnfD, RnfE and RnfG.

It is found in the cell inner membrane. In terms of biological role, part of a membrane-bound complex that couples electron transfer with translocation of ions across the membrane. The protein is Ion-translocating oxidoreductase complex subunit E of Pseudomonas aeruginosa (strain UCBPP-PA14).